A 155-amino-acid polypeptide reads, in one-letter code: Small ribosomal subunit protein uS7 (155 aa).

It belongs to the universal ribosomal protein uS7 family. Part of the 30S ribosomal subunit. Contacts proteins S9 and S11.

In terms of biological role, one of the primary rRNA binding proteins, it binds directly to 16S rRNA where it nucleates assembly of the head domain of the 30S subunit. Is located at the subunit interface close to the decoding center, probably blocks exit of the E-site tRNA. This Chlorobium phaeobacteroides (strain DSM 266 / SMG 266 / 2430) protein is Small ribosomal subunit protein uS7.